A 509-amino-acid chain; its full sequence is Zinc finger protein Aiolos (509 aa).

Residues 1 to 19 (MEDIQTNAELKSTQEQSVP) are compositionally biased toward polar residues. Residues 1–86 (MEDIQTNAEL…MGNAEEPEIP (86 aa)) are disordered. Residues Ser22 and Ser42 each carry the phosphoserine modification. The segment covering 56–72 (DSMKVKDEYSERDENVL) has biased composition (basic and acidic residues). Glycyl lysine isopeptide (Lys-Gly) (interchain with G-Cter in SUMO2) cross-links involve residues Lys61, Lys73, and Lys100. 3 C2H2-type zinc fingers span residues 118-140 (MNCDVCGLSCISFNVLMVHKRSH), 146-168 (FQCNQCGASFTQKGNLLRHIKLH), and 174-196 (FKCHLCNYACQRRDALTGHLRTH). The C2H2-type 4; atypical zinc finger occupies 202–224 (YKCEFCGRSYKQRSSLEEHKERC). Residue Lys245 forms a Glycyl lysine isopeptide (Lys-Gly) (interchain with G-Cter in SUMO2) linkage. Thr326 bears the Phosphothreonine mark. Residues 364–394 (IHLPEKSVPSERGLSPNNSGHDSTDTDSNHE) are disordered. A Phosphoserine modification is found at Ser378. Residues 385 to 394 (DSTDTDSNHE) are compositionally biased toward basic and acidic residues. The C2H2-type 5 zinc finger occupies 452 to 474 (YRCDHCRVLFLDYVMFTIHMGCH). The interval 452–504 (YRCDHCRVLFLDYVMFTIHMGCHGFRDPFECNMCGYRSHDRYEFSSHIARGEH) is mediates homodimerization and heterodimerization. A C2H2-type 6; atypical zinc finger spans residues 480 to 504 (FECNMCGYRSHDRYEFSSHIARGEH).

This sequence belongs to the Ikaros C2H2-type zinc-finger protein family. As to quaternary structure, homodimer. Heterodimer with other IKAROS family members. Interacts with IKZF4 and IKZF5. Interacts with IKZF1. Interacts with HRAS. Interacts with FOXP3; this interaction may be required for silencing target genes and regulating the suppressive activity of FOXP3-positive regulatory T-cells (Treg). Interacts with BCL21L isoform Bcl-X(L); this interaction blocks the anti-apoptotic role of BCL21L. Associates with histone deacetylase complexes containing HDAC1, MTA2 and SIN3A. Phosphorylation on tyrosine residues induced by IL2 is required for dissociation from HRAS and nuclear translocation of IKZF3 in T-cells. Phosphorylation on tyrosine residues induced by IL4 is required for dissociation from Bcl-X(L) in T-cells. As to expression, expressed most strongly in peripheral blood leukocytes, the spleen, and the thymus.

The protein localises to the nucleus. Its subcellular location is the cytoplasm. Transcription factor that plays an important role in the regulation of lymphocyte differentiation. Plays an essential role in regulation of B-cell differentiation, proliferation and maturation to an effector state. Involved in regulating BCL2 expression and controlling apoptosis in T-cells in an IL2-dependent manner. In Homo sapiens (Human), this protein is Zinc finger protein Aiolos (IKZF3).